A 400-amino-acid chain; its full sequence is Putative lysosomal acid lipase/cholesteryl ester hydrolase (400 aa).

The signal sequence occupies residues 1–17 (MWRLIIIAILFQGLVNS). N-linked (GlcNAc...) asparagine glycans are attached at residues Asn34, Asn129, and Asn159. The AB hydrolase-1 domain maps to 78–378 (PAVFLQHGLL…EWEHLDFIWG (301 aa)). The active-site Charge relay system is Ser172. An N-linked (GlcNAc...) asparagine glycan is attached at Asn271. Residue His372 is the Charge relay system of the active site.

Belongs to the AB hydrolase superfamily. Lipase family. In terms of tissue distribution, expressed by the venom gland.

Its subcellular location is the secreted. It catalyses the reaction a sterol ester + H2O = a sterol + a fatty acid + H(+). In terms of biological role, in physiological conditions, is crucial for intracellular hydrolysis of cholesteryl esters and triglycerides that have been internalized via receptor-mediated endocytosis of lipoprotein particles. In venom, the biological contribution is unknown. This Crotalus adamanteus (Eastern diamondback rattlesnake) protein is Putative lysosomal acid lipase/cholesteryl ester hydrolase.